A 296-amino-acid polypeptide reads, in one-letter code: Acetylglutamate kinase (296 aa).

Substrate-binding positions include 71–72 (GG), R93, and N186.

The protein belongs to the acetylglutamate kinase family. ArgB subfamily.

It localises to the cytoplasm. The enzyme catalyses N-acetyl-L-glutamate + ATP = N-acetyl-L-glutamyl 5-phosphate + ADP. The protein operates within amino-acid biosynthesis; L-arginine biosynthesis; N(2)-acetyl-L-ornithine from L-glutamate: step 2/4. In terms of biological role, catalyzes the ATP-dependent phosphorylation of N-acetyl-L-glutamate. This chain is Acetylglutamate kinase, found in Synechococcus sp. (strain RCC307).